A 990-amino-acid chain; its full sequence is MARPVQLAPGSLALVLSPREAGQAAGEPGGRALFRAFRRANARCFWNARLARAASRLAFLGWLRRGVLLVRAPQPCVQVLRDAWRRRALRPPRGFRITAVGDVFPVQMSPIAQCRFVPLAEVLCCAIADMNAAQVMVTQQSLLEHLIKHYPGIAVPSPDILYSTLGALIQERKIYHTGEGYFIVTPSTYFITNTPMQGNKSALLSNEGCSGPTSGTYLVSVDCCAEPTQENEALFSHCPSCQCYPDTSMCDSKDLLTAAEVTRKSQEGLEETTALTENQVVSASEDTHICVNPKPLPYTKDKGKRFGFGFLWRSLSRKEKPKAEYHSFSAQFPPEEWPVRDEDSSTKIPRDVEHALIKRINPVLTVDNLTKHTALMQKYEEQKKYNSQGTSMDILTTRHKDSSKEVIGKRQGQFAKSRRRGSSHKGRHKARSQGSELEPGNPGQEKEKQPKVPAAQPAPRTKSPSEQVHHLQGRNPAVLGSHLIYKKQINNPFQGMHLRKHSVSKGHAVQKTHGLKPTCVGPEEKPFWSAGSSDPSGVFDGEAQPPYPEQCRDKLEAGSTQVAKAPVHPVSDDFRGGPGNYPPRRVLPGPSRCCSFRESMLRPGVYHEENKDLPEVLRKSWSTCDMFLGTKEKKQALPAQRCSLDPDSSSVHAEDKTVDKILHQFQNLGLLDCPAGANRLRTHERQDGNSEELSRKALQIPEAEIVNMENEGLSDSEQDQVALSHSDPGAGDDGGCSSLCLEDDDFSETDDFCPSLPGHTQHSFAGGGTWNHLGTPAMTGKSLTDCNSKAHRLELLAIERNPWYKATGLFSNAGESPNPDLSDNPGQNSRIPWGFNYEGEPTVAHVQTPAAAAGRSLLACSTVRTTSFPVEILQESPGDRGKSPIVWRQSLPSQEMKEHFTDKLQLVKTSHGPVSAQEPQGEHLEGTENYSMTGDSGIDSPRTQSLVSTNSAILDGFKRRQHFLPNREGVQKSQNLASNSLFQLTPAINV.

The segment covering 396 to 408 has biased composition (basic and acidic residues); sequence TTRHKDSSKEVIG. Disordered regions lie at residues 396-471, 562-586, 712-736, and 809-832; these read TTRH…VHHL, VAKA…PRRV, GLSD…DGGC, and LFSN…SRIP. Residues 416–431 are compositionally biased toward basic residues; the sequence is KSRRRGSSHKGRHKAR. The segment covering 809 to 830 has biased composition (polar residues); it reads LFSNAGESPNPDLSDNPGQNSR.

As to expression, detected in sensory epithelial cells of the inner ear but not in adjacent surrounding tissue (at protein level).

It is found in the nucleus. It localises to the cytoplasm. The protein localises to the cytoskeleton. The protein resides in the microtubule organizing center. Its subcellular location is the centrosome. In terms of biological role, involved in regulating the levels of reactive oxidative species and reactive nitrogen species and in mitochondrial homeostasis in the placenta. Required for regulation of inner ear epithelial cell proliferation via the AKT signaling pathway. Involved in cell cycle regulation by binding to the CCNB1 promoter, up-regulating its expression and promoting mitotic entry. Induces phosphorylation of MAPT/tau. This is Storkhead-box protein 1 from Mus musculus (Mouse).